Consider the following 101-residue polypeptide: Putative regulatory protein Csac_2087 (101 aa).

Belongs to the RemA family.

In Caldicellulosiruptor saccharolyticus (strain ATCC 43494 / DSM 8903 / Tp8T 6331), this protein is Putative regulatory protein Csac_2087.